The sequence spans 374 residues: N5-carboxyaminoimidazole ribonucleotide synthase (374 aa).

Residues arginine 108, lysine 148, 153–159 (GYDGKGQ), 183–186 (EKYL), glutamate 191, histidine 214, and 266–267 (NE) contribute to the ATP site. The region spanning 112–296 (KETLKSAGTK…QFDTHILAVT (185 aa)) is the ATP-grasp domain.

The protein belongs to the PurK/PurT family. As to quaternary structure, homodimer.

It carries out the reaction 5-amino-1-(5-phospho-beta-D-ribosyl)imidazole + hydrogencarbonate + ATP = 5-carboxyamino-1-(5-phospho-D-ribosyl)imidazole + ADP + phosphate + 2 H(+). The protein operates within purine metabolism; IMP biosynthesis via de novo pathway; 5-amino-1-(5-phospho-D-ribosyl)imidazole-4-carboxylate from 5-amino-1-(5-phospho-D-ribosyl)imidazole (N5-CAIR route): step 1/2. In terms of biological role, catalyzes the ATP-dependent conversion of 5-aminoimidazole ribonucleotide (AIR) and HCO(3)(-) to N5-carboxyaminoimidazole ribonucleotide (N5-CAIR). The sequence is that of N5-carboxyaminoimidazole ribonucleotide synthase from Staphylococcus aureus (strain COL).